A 187-amino-acid chain; its full sequence is Ribosome-recycling factor (187 aa).

Belongs to the RRF family.

The protein localises to the cytoplasm. In terms of biological role, responsible for the release of ribosomes from messenger RNA at the termination of protein biosynthesis. May increase the efficiency of translation by recycling ribosomes from one round of translation to another. This chain is Ribosome-recycling factor, found in Xanthobacter autotrophicus (strain ATCC BAA-1158 / Py2).